Here is an 808-residue protein sequence, read N- to C-terminus: Digalactosyldiacylglycerol synthase 1, chloroplastic (808 aa).

The tract at residues 1–23 (MVKETLIPPSSTSMTTGTSSSSS) is disordered. A chloroplast-targeting transit peptide spans 1–58 (MVKETLIPPSSTSMTTGTSSSSSLSMTLSSTNALSFLSKGWREVWDSADADLQLMRDR). A compositionally biased stretch (low complexity) spans 10 to 23 (SSTSMTTGTSSSSS).

It belongs to the glycosyltransferase group 1 family. Glycosyltransferase 4 subfamily.

Its subcellular location is the plastid. It is found in the chloroplast outer membrane. The enzyme catalyses a 1,2-diacyl-3-O-(beta-D-galactosyl)-sn-glycerol + UDP-alpha-D-galactose = a 1,2-diacyl-3-O-[alpha-D-galactosyl-(1-&gt;6)-beta-D-galactosyl]-sn-glycerol + UDP + H(+). Functionally, involved in the synthesis of diacylglycerol galactolipids that are specifically found in thylakoid membranes. Specific for alpha-glycosidic linkages. Responsible for the final assembly of galactolipids in photosynthetic membranes. Digalactosyldiacylglycerol (DGDG) provides stability to the photosystem I (PSI) complex, especially to the PsaA, PsaB, PsaC, PsaL and PsaH subunits. This Arabidopsis thaliana (Mouse-ear cress) protein is Digalactosyldiacylglycerol synthase 1, chloroplastic.